The sequence spans 150 residues: MTTFLIKHKASGKYFHPKGGTSNPPNGTNLVLHSDIHERMYFQFEVVNERWRYIKHVASEKIVHPFGGKADPLNGTNMVLHQDRHDRALFAMDFFNDNIRHKGGKYIHPKGGSKNPSNGNLTVMHGDEHGAMEFIFVSPKNKDKRVLVYA.

D-galactose-binding residues include His16 and Gly19. An N-linked (GlcNAc...) asparagine glycan is attached at Asn26. D-galactose-binding positions include 35-37, His64, and Gly67; that span reads DIH. An N-linked (GlcNAc...) asparagine glycan is attached at Asn74. D-galactose contacts are provided by residues 83-85, His108, and Gly111; that span reads DRH. N-linked (GlcNAc...) asparagine glycosylation occurs at Asn118. 127–129 contributes to the D-galactose binding site; sequence DEH.

Oligomerizes in solution. The N-terminus is blocked. In terms of tissue distribution, expressed in mantle. Expressed 51 and 1.6 fold in mantle and gonads, respectively, relative to that in hemocytes. Expressed at a much lower level in other tissues tested including gill, muscle and hepatopancreas.

Hemagglutinating activity does not require Ca(2+) ions. Hemagglutinating activity is inhibited by porcine stomach mucin (PSM), bovine submaxillary mucin (BSM) and fetuin. Agglutination of V.proteolyticus bacteria is inhibited by D-galactose, but not by D-glucose. Fungal binding is inhibited by D-galactose, but not by pathogen-associated molecular patterns (PAMPs) including lipopolysaccharide (LPS), peptidoglycan and beta-glucan. D-galactose-binding lectin. Binds both alpha and beta anomer of galactose (Gal). Binds strongly to branched beta-Gal-terminated glycans and weakly to unbranched glycans with alpha-Gal on the end of chains. Has strong affinity for both Gal and GalNAc. Binds glycoproteins containing mucin-type chains. Has hemagglutinating activity towards human group A erythrocytes. Has hemagglutinating activity towards rabbit erythrocytes. Agglutinates V.proteolyticus bacteria. Binds strongly to fungi including species from genera Aspergillus, Alternaria, Fusarium and Haematonectria, and to a lesser extent to fungi from genera Trichoderma. Decreases conidia germination and hyphal growth of fungi. At high concentration, stimulates secretion of cytokines TNF-alpha and IFN-gamma from human peripheral blood cells, and at low concentration reduces hyperexpression of cytokine IL-10 in these cells, indicative of immunomodulatory capability. However, has no effect on IL-4 production. Recognizes pathogen-associated molecular patterns (PAMPs) and binds to peptidoglycan from S.aureus, but has only little binding to beta-1,3-glucan from E.gracilis and lipopolysaccharide (LPS) from E.coli. May be involved in innate immunity acting as an antibacterial or antifungal agent recognizing carbohydrate ligands on the surface of pathogens. In Mytilus trossulus (Blue mussel), this protein is D-galactose-binding lectin.